We begin with the raw amino-acid sequence, 179 residues long: Molybdopterin synthase catalytic subunit (179 aa).

Over residues 1 to 10 (MTTSEDQTTP) the composition is skewed to polar residues. The tract at residues 1-21 (MTTSEDQTTPAHLDPKTYPRH) is disordered. Substrate-binding positions include 127 to 128 (HR), Lys143, and 150 to 152 (KRE).

This sequence belongs to the MoaE family. MOCS2B subfamily. In terms of assembly, heterotetramer; composed of 2 small (MOCS2A) and 2 large (MOCS2B) subunits.

The protein resides in the cytoplasm. The catalysed reaction is 2 [molybdopterin-synthase sulfur-carrier protein]-C-terminal-Gly-aminoethanethioate + cyclic pyranopterin phosphate + H2O = molybdopterin + 2 [molybdopterin-synthase sulfur-carrier protein]-C-terminal Gly-Gly + 2 H(+). It functions in the pathway cofactor biosynthesis; molybdopterin biosynthesis. In terms of biological role, catalytic subunit of the molybdopterin synthase complex, a complex that catalyzes the conversion of precursor Z into molybdopterin. Acts by mediating the incorporation of 2 sulfur atoms from thiocarboxylated MOCS2A into precursor Z to generate a dithiolene group. This is Molybdopterin synthase catalytic subunit from Aspergillus oryzae (strain ATCC 42149 / RIB 40) (Yellow koji mold).